We begin with the raw amino-acid sequence, 164 residues long: Pheromone-binding protein (164 aa).

The N-terminal stretch at 1 to 22 (MSIQGQIALALMVNMAVGSVDA) is a signal peptide. 3 disulfides stabilise this stretch: C41-C76, C72-C130, and C119-C139.

The protein belongs to the PBP/GOBP family. Homodimer. In terms of tissue distribution, antenna.

Functionally, this major soluble protein in olfactory sensilla of male moths serves to solubilize the extremely hydrophobic pheromone molecules such as bombykol and to transport pheromone through the aqueous lymph to receptors located on olfactory cilia. The polypeptide is Pheromone-binding protein (Bombyx mori (Silk moth)).